The following is a 551-amino-acid chain: CTP synthase (551 aa).

The tract at residues 1–273 is amidoligase domain; it reads MKNTTNTKRT…DSKILELLNI (273 aa). S21 is a CTP binding site. Residue S21 coordinates UTP. ATP contacts are provided by residues 22–27 and D79; that span reads SLGKGL. Residues D79 and E147 each contribute to the Mg(2+) site. Residues 154–156, 194–199, and K230 contribute to the CTP site; these read DIE and KTKPTQ. Residues 194-199 and K230 contribute to the UTP site; that span reads KTKPTQ. A Glutamine amidotransferase type-1 domain is found at 298 to 551; sequence TIAITGKYVD…ISAAVANKKG (254 aa). G360 serves as a coordination point for L-glutamine. The active-site Nucleophile; for glutamine hydrolysis is the C387. Residues 388–391, E411, and R479 each bind L-glutamine; that span reads LGMQ. Active-site residues include H524 and E526.

It belongs to the CTP synthase family. Homotetramer.

The enzyme catalyses UTP + L-glutamine + ATP + H2O = CTP + L-glutamate + ADP + phosphate + 2 H(+). It carries out the reaction L-glutamine + H2O = L-glutamate + NH4(+). It catalyses the reaction UTP + NH4(+) + ATP = CTP + ADP + phosphate + 2 H(+). It participates in pyrimidine metabolism; CTP biosynthesis via de novo pathway; CTP from UDP: step 2/2. Its activity is regulated as follows. Allosterically activated by GTP, when glutamine is the substrate; GTP has no effect on the reaction when ammonia is the substrate. The allosteric effector GTP functions by stabilizing the protein conformation that binds the tetrahedral intermediate(s) formed during glutamine hydrolysis. Inhibited by the product CTP, via allosteric rather than competitive inhibition. Its function is as follows. Catalyzes the ATP-dependent amination of UTP to CTP with either L-glutamine or ammonia as the source of nitrogen. Regulates intracellular CTP levels through interactions with the four ribonucleotide triphosphates. This Desulfotalea psychrophila (strain LSv54 / DSM 12343) protein is CTP synthase.